Consider the following 120-residue polypeptide: U13-lycotoxin-Ls1c (120 aa).

The N-terminal stretch at 1–16 (MKILFVLISILYAVYC) is a signal peptide. The propeptide occupies 17–54 (FSSEEDVDSAYLANELEPVEDINSEQYAALEPKEEQER). 3 cysteine pairs are disulfide-bonded: Cys56–Cys70, Cys69–Cys87, and Cys78–Cys85. The 40-residue stretch at 56-95 (CADMGQDRKDDCDCCLNIATCNCWFGRYFCSCTFGDYQTC) folds into the Agouti domain.

This sequence belongs to the neurotoxin 05 (agouti) family. In terms of processing, contains 5 disulfide bonds. Expressed by the venom gland.

It is found in the secreted. The polypeptide is U13-lycotoxin-Ls1c (Lycosa singoriensis (Wolf spider)).